Here is a 234-residue protein sequence, read N- to C-terminus: Synaptogyrin-1 (234 aa).

N-acetylmethionine is present on Met1. Residues 1–23 lie on the Cytoplasmic side of the membrane; that stretch reads MEGGAYGAGKAGGAFDPYALVRQ. The region spanning 20-173 is the MARVEL domain; the sequence is LVRQPHTILR…QAVLAFQRYQ (154 aa). Residues 24-44 form a helical membrane-spanning segment; it reads PHTILRVVSWLFSIVVFGSIV. Residues 45 to 71 lie on the Lumenal side of the membrane; that stretch reads NEGYLNSASEGEEFCIYNRNPNACSYG. The helical transmembrane segment at 72 to 92 threads the bilayer; sequence VAVGVLAFLTCLLYLALDVYF. The Cytoplasmic portion of the chain corresponds to 93 to 103; that stretch reads PQISSVKDRKK. Residues 104-124 traverse the membrane as a helical segment; that stretch reads AVLSDIGVSAFWAFLWFVGFC. Residues 125 to 148 are Lumenal-facing; the sequence is YLANQWQVSKPKDNPLNEGTDAAR. A helical membrane pass occupies residues 149 to 169; sequence AAIAFSFFSIFTWAGQAVLAF. Topologically, residues 170–234 are cytoplasmic; that stretch reads QRYQIGADSA…EPQGYQSQGY (65 aa). Residues 192-234 are disordered; sequence SSMPYAPYVEPSTGPDPAGMGGTYQQPANTFDTEPQGYQSQGY. Polar residues predominate over residues 214–234; that stretch reads TYQQPANTFDTEPQGYQSQGY.

The protein belongs to the synaptogyrin family.

The protein resides in the cytoplasmic vesicle. The protein localises to the secretory vesicle. Its subcellular location is the synaptic vesicle membrane. It is found in the melanosome. Functionally, may play a role in regulated exocytosis. Modulates the localization of synaptophysin/SYP into synaptic-like microvesicles and may therefore play a role in synaptic-like microvesicle formation and/or maturation. Involved in the regulation of short-term and long-term synaptic plasticity. This chain is Synaptogyrin-1, found in Pongo abelii (Sumatran orangutan).